The primary structure comprises 548 residues: WEB family protein At1g12150 (548 aa).

The stretch at 71 to 544 forms a coiled coil; sequence KEFMKIKQKL…ELQRWRQQEN (474 aa). The segment covering 430–448 has biased composition (basic and acidic residues); sequence VREEMKMISQKQESKKQDE. The segment at 430-455 is disordered; it reads VREEMKMISQKQESKKQDEESSGSKI.

Belongs to the WEB family.

This is WEB family protein At1g12150 from Arabidopsis thaliana (Mouse-ear cress).